Here is a 1094-residue protein sequence, read N- to C-terminus: Centrosomal protein of 128 kDa (1094 aa).

Residues 1 to 29 are disordered; sequence MAESSSESDHFRCRDRLSPWAARSTHRGT. Residues 7–17 are compositionally biased toward basic and acidic residues; the sequence is ESDHFRCRDRL. Ser-31 bears the Phosphoserine mark. The segment at 115 to 140 is disordered; that stretch reads DGGTGSELHHFPPTSPLKDYGDPQGI. 2 coiled-coil regions span residues 190–827 and 879–959; these read SRSD…QESI and EELK…IALE. A phosphoserine mark is found at Ser-249, Ser-291, and Ser-331. Residues 319–345 are disordered; the sequence is AEGDRKGLQHQVSQISKQQSNYQDEQG. Residues 328–342 are compositionally biased toward polar residues; that stretch reads HQVSQISKQQSNYQD. Positions 987 to 999 are enriched in basic and acidic residues; sequence DSCSSSERTDGRY. The disordered stretch occupies residues 987 to 1018; that stretch reads DSCSSSERTDGRYSKYRVRRNSLQHHQDDTKY. Residues 1000 to 1009 show a composition bias toward basic residues; sequence SKYRVRRNSL. Residue Ser-1061 is modified to Phosphoserine. The tract at residues 1067-1094 is disordered; it reads VAPDSASNKEDATMNGTSSQPKKEEYGS.

The protein localises to the cytoplasm. Its subcellular location is the cytoskeleton. The protein resides in the microtubule organizing center. It is found in the centrosome. It localises to the centriole. The protein localises to the spindle pole. In Homo sapiens (Human), this protein is Centrosomal protein of 128 kDa (CEP128).